The following is a 162-amino-acid chain: Sorting nexin-3 (162 aa).

Position 2 is an N-acetylalanine (Ala-2). The region spanning Asn-27–Asp-151 is the PX domain. Residue Arg-43 is modified to Omega-N-methylarginine. A 1,2-diacyl-sn-glycero-3-phospho-(1D-myo-inositol-3-phosphate) is bound by residues Arg-70, Ser-72, Lys-95, and Arg-118. A Phosphoserine modification is found at Ser-72. A Glycyl lysine isopeptide (Lys-Gly) (interchain with G-Cter in SUMO2) cross-link involves residue Lys-95. The binds predominantly to PtdIns(P5) and weaker to PtdIns(P3) abd PtdIns(P4); involved in neurite outgrowth regulation stretch occupies residues Asp-147–Ala-162.

Belongs to the sorting nexin family. In terms of assembly, interacts with VPS26A, VPS29. Interacts with VPS35; the interaction with VPS35 is direct. The association with the retromer CSC subcomplex subunits is proposed to represent a functional distinct retromer variant described as SNX3-retromer complex. Interacts with USP10 and SCNN1A. Interacts with TRFC. Interacts with SNX8; 2 molecules of SNX8 seems to associate with one molecule of SNX3. Interacts with PTPRU. Interacts with MON2 and DOP1B. Post-translationally, ubiquitinated, leading to its proteasomal degradation. Deubiquitinated by USP10. As to expression, highly expressed in developing red cells and hematopoietic tissues.

It localises to the early endosome. It is found in the cytoplasmic vesicle. Its subcellular location is the phagosome. Functionally, phosphoinositide-binding protein required for multivesicular body formation. Specifically binds phosphatidylinositol 3-phosphate (PtdIns(P3)). Can also bind phosphatidylinositol 4-phosphate (PtdIns(P4)), phosphatidylinositol 5-phosphate (PtdIns(P5)) and phosphatidylinositol 3,5-biphosphate (PtdIns(3,5)P2). Plays a role in protein transport between cellular compartments. Together with RAB7A facilitates endosome membrane association of the retromer cargo-selective subcomplex (CSC). May act in part as component of the SNX3-retromer complex which mediates the retrograde endosome-to-TGN transport of WLS distinct from the SNX-BAR retromer pathway. Promotes stability and cell surface expression of epithelial sodium channel (ENAC) subunits SCNN1A and SCNN1G. Not involved in EGFR degradation. Involved in the regulation of phagocytosis in dendritic cells possibly by regulating EEA1 recruitment to the nascent phagosomes. Involved in iron homeostasis through regulation of endocytic recycling of the transferrin receptor Tfrc presuambly by delivering the transferrin:transferrin receptor complex to recycling endosomes; the function may involve the CSC retromer subcomplex. Involved in regulation of neurite outgrowth in primary neurons. The polypeptide is Sorting nexin-3 (Snx3) (Mus musculus (Mouse)).